An 81-amino-acid polypeptide reads, in one-letter code: MSHSVKIYDTCIGCTQCVRACPTDVLEMVPWDGCKASQIASAPRTEDCVGCKRCESACPTDFLSVRVYLGSETTRSMGLAY.

4Fe-4S ferredoxin-type domains lie at Ser2–Trp31 and Ile39–Tyr68. Residues Cys11, Cys14, Cys17, Cys21, Cys48, Cys51, Cys54, and Cys58 each contribute to the [4Fe-4S] cluster site.

As to quaternary structure, the eukaryotic PSI reaction center is composed of at least 11 subunits. [4Fe-4S] cluster is required as a cofactor.

It localises to the plastid. Its subcellular location is the chloroplast thylakoid membrane. It catalyses the reaction reduced [plastocyanin] + hnu + oxidized [2Fe-2S]-[ferredoxin] = oxidized [plastocyanin] + reduced [2Fe-2S]-[ferredoxin]. In terms of biological role, apoprotein for the two 4Fe-4S centers FA and FB of photosystem I (PSI); essential for photochemical activity. FB is the terminal electron acceptor of PSI, donating electrons to ferredoxin. The C-terminus interacts with PsaA/B/D and helps assemble the protein into the PSI complex. Required for binding of PsaD and PsaE to PSI. PSI is a plastocyanin/cytochrome c6-ferredoxin oxidoreductase, converting photonic excitation into a charge separation, which transfers an electron from the donor P700 chlorophyll pair to the spectroscopically characterized acceptors A0, A1, FX, FA and FB in turn. The chain is Photosystem I iron-sulfur center from Pleurastrum terricola (Filamentous green alga).